Reading from the N-terminus, the 185-residue chain is Inner membrane lipoprotein DcrB (185 aa).

The first 19 residues, 1-19 (MRNLVKYVGIGLLVMGLAA), serve as a signal peptide directing secretion. Residue cysteine 20 is the site of N-palmitoyl cysteine attachment. A lipid anchor (S-diacylglycerol cysteine) is attached at cysteine 20.

The protein belongs to the DcrB family.

The protein localises to the cell membrane. Its function is as follows. Plays a role in cell envelope biogenesis, maintenance of cell envelope integrity and membrane homeostasis. Essential for lipoprotein maturation under conditions where membrane fluidity may be altered. The polypeptide is Inner membrane lipoprotein DcrB (Shigella flexneri).